Consider the following 349-residue polypeptide: MAKAGEKSVGGGKRGLKRKAAAEEPQEAAAASDGTAESGVQPAKAAAFPPGFSISEIKNKQRRHLMFTRWKQQQRKEKLAAKKKLKKEREALGDKAPPKPVPKTIDNQRVYDETTVDPNDEEVAYDEATDEFASYFNRQTSPKILITTSDRPHGRTVRLCEQLSTVIPDSHVYYRRGLALKKIIPQCIARDFTDLIVINEDRKTPNGLILSHLPNGPTAHFKMSSVRLRKEIKRRGKDPTEHVPEIILNNFTTRLGHSIGRMFASLFPHNPQFIGRQVATFHNQRDYIFFRFHRYIFKSEKKVGIQELGPRFTLKLRSLQKGTFDSKYGEYEWVHKPREMDTSRRKFHL.

Disordered stretches follow at residues 1–58 (MAKA…SEIK) and 71–105 (KQQQRKEKLAAKKKLKKEREALGDKAPPKPVPKTI). The span at 87-97 (KEREALGDKAP) shows a compositional bias: basic and acidic residues. One can recognise a Brix domain in the interval 142-325 (PKILITTSDR…LRSLQKGTFD (184 aa)). Residues 303–320 (VGIQELGPRFTLKLRSLQ) form an RNA-binding region.

The protein localises to the nucleus. The protein resides in the nucleolus. In terms of biological role, may be required for ribosome biogenesis. This is Ribosome production factor 1 (Rpf1) from Mus musculus (Mouse).